Reading from the N-terminus, the 54-residue chain is Ovomucoid (54 aa).

In terms of domain architecture, Kazal-like spans 4 to 54 (VDCSEYPKPACTLEYRPLCGSDSKTYGNKCNFCNAVVESNGTLTLSHFGKC). Intrachain disulfides connect C6/C36, C14/C33, and C22/C54. A glycan (N-linked (GlcNAc...) asparagine) is linked at N43.

It localises to the secreted. The chain is Ovomucoid from Alectoris chukar (Chukar partridge).